A 196-amino-acid chain; its full sequence is ATP-dependent Clp protease proteolytic subunit (196 aa).

S96 serves as the catalytic Nucleophile. Residue H121 is part of the active site.

This sequence belongs to the peptidase S14 family. In terms of assembly, fourteen ClpP subunits assemble into 2 heptameric rings which stack back to back to give a disk-like structure with a central cavity, resembling the structure of eukaryotic proteasomes.

The protein localises to the cytoplasm. It catalyses the reaction Hydrolysis of proteins to small peptides in the presence of ATP and magnesium. alpha-casein is the usual test substrate. In the absence of ATP, only oligopeptides shorter than five residues are hydrolyzed (such as succinyl-Leu-Tyr-|-NHMec, and Leu-Tyr-Leu-|-Tyr-Trp, in which cleavage of the -Tyr-|-Leu- and -Tyr-|-Trp bonds also occurs).. In terms of biological role, cleaves peptides in various proteins in a process that requires ATP hydrolysis. Has a chymotrypsin-like activity. Plays a major role in the degradation of misfolded proteins. This Streptococcus pneumoniae (strain ATCC 700669 / Spain 23F-1) protein is ATP-dependent Clp protease proteolytic subunit.